Reading from the N-terminus, the 870-residue chain is Valine--tRNA ligase (870 aa).

Residues 42-52 (PNVTGVLHIGH) carry the 'HIGH' region motif. The 'KMSKS' region signature appears at 527–531 (KMSKS). Lys530 contributes to the ATP binding site. Positions 800–870 (LENVDLSGIL…ISVELQNLRG (71 aa)) form a coiled coil.

This sequence belongs to the class-I aminoacyl-tRNA synthetase family. ValS type 1 subfamily. Monomer.

It localises to the cytoplasm. It catalyses the reaction tRNA(Val) + L-valine + ATP = L-valyl-tRNA(Val) + AMP + diphosphate. Functionally, catalyzes the attachment of valine to tRNA(Val). As ValRS can inadvertently accommodate and process structurally similar amino acids such as threonine, to avoid such errors, it has a 'posttransfer' editing activity that hydrolyzes mischarged Thr-tRNA(Val) in a tRNA-dependent manner. This chain is Valine--tRNA ligase, found in Campylobacter jejuni subsp. jejuni serotype O:2 (strain ATCC 700819 / NCTC 11168).